The sequence spans 592 residues: Inactive glycosyltransferase 25 family member 3 (592 aa).

Positions 1 to 19 are cleaved as a signal peptide; that stretch reads MHVARLLPLLLLLGQQLRA. Asn-72, Asn-150, Asn-234, and Asn-357 each carry an N-linked (GlcNAc...) asparagine glycan. Residues 540–592 form a disordered region; sequence AEWLSDTETSSPWDDDSGRLISQTGSQKALRGPHLHLTGSSGHSLHPHHRDEL. A Prevents secretion from ER motif is present at residues 589–592; the sequence is RDEL.

Belongs to the glycosyltransferase 25 family.

The protein resides in the endoplasmic reticulum lumen. Functionally, probable cell adhesion protein involved in leukocyte transmigration across the blood-brain barrier. Does not express any beta-galactosyltransferase activity in vitro. This Mus musculus (Mouse) protein is Inactive glycosyltransferase 25 family member 3 (Cercam).